We begin with the raw amino-acid sequence, 82 residues long: uncharacterized protein (82 aa).

Residues 22-82 (LRRSRSSRNG…WPPPCAFTPG (61 aa)) form a disordered region. The segment covering 47–58 (HRGEPGHPRMEE) has biased composition (basic and acidic residues). A compositionally biased stretch (pro residues) spans 73-82 (WPPPCAFTPG).

This is an uncharacterized protein from Homo sapiens (Human).